Reading from the N-terminus, the 167-residue chain is Small ribosomal subunit protein uS5 (167 aa).

The 64-residue stretch at 11–74 folds into the S5 DRBM domain; the sequence is LQEKLIAVNR…EKARRAMINV (64 aa).

This sequence belongs to the universal ribosomal protein uS5 family. In terms of assembly, part of the 30S ribosomal subunit. Contacts proteins S4 and S8.

With S4 and S12 plays an important role in translational accuracy. Its function is as follows. Located at the back of the 30S subunit body where it stabilizes the conformation of the head with respect to the body. In Yersinia pseudotuberculosis serotype O:1b (strain IP 31758), this protein is Small ribosomal subunit protein uS5.